Consider the following 8886-residue polypeptide: Obscurin (8886 aa).

Ig-like domains follow at residues 9-99, 109-201, 234-320, and 329-415; these read PRFL…LRVD, PHFL…LVVD, PPSP…QTYS, and PTVP…AELS. A disulfide bond links cysteine 30 and cysteine 81. The segment at 135–165 is disordered; sequence SPQPAVSWSKDGRRLGPPDAPHVRVEEHGES. Positions 144 to 164 are enriched in basic and acidic residues; it reads KDGRRLGPPDAPHVRVEEHGE. 2 cysteine pairs are disulfide-bonded: cysteine 257–cysteine 309 and cysteine 352–cysteine 402. Serine 393 bears the Phosphoserine mark. The 98-residue stretch at 513 to 610 folds into the Fibronectin type-III 1 domain; the sequence is PPADPVVKAK…FPGTMHLVPM (98 aa). Ig-like domains are found at residues 702–793, 859–951, 951–1043, 1043–1135, 1135–1227, 1227–1319, 1319–1407, 1411–1503, 1503–1595, 1595–1687, 1687–1779, 1779–1871, 1871–1963, 1963–2051, 2055–2147, 2152–2241, 2242–2325, 2329–2415, 2420–2504, 2598–2681, 2721–2812, 2900–2984, 3078–3162, 3258–3342, 3348–3431, 3527–3610, 3616–3700, 3785–3876, 3881–3964, 4042–4125, 4130–4213, 4219–4301, 4307–4389, 4395–4477, 4483–4565, 4571–4653, 4659–4741, 4746–4829, 4833–4916, 4923–5007, 5013–5105, 5378–5464, and 5557–5659; these read PSSK…QDIT, PKLV…VAEP, PKMV…VTEP, PKLV…VTEP, PKLV…FRLD, PKLA…VAEP, PKLM…VAEP, TRLM…VAEA, PERP…EEVA, AKFS…ARLT, PRVV…AALR, PVLF…AKLN, PVSF…ASLR, PVTL…QSIT, PVVL…AEVT, PVVF…SKVS, PVDI…AKLC, NRFT…ARLL, PSIF…SSIV, PVRF…ATLT, ATLT…ATLT, PAKF…ATLT, PTKF…ATLS, PSRF…ATLS, PRFI…ATLN, PRFI…AVLT, PKFT…ATLS, PRFI…ATLS, PAKF…ATLS, PQVV…TSAT, PVRF…ARLS, PKFK…PEVT, LEVL…ARLS, and PQMV…TFNV. Disulfide bonds link cysteine 885–cysteine 935, cysteine 977–cysteine 1027, cysteine 1069–cysteine 1119, cysteine 1161–cysteine 1211, cysteine 1253–cysteine 1303, cysteine 1345–cysteine 1395, cysteine 1437–cysteine 1487, cysteine 1529–cysteine 1579, cysteine 1621–cysteine 1671, cysteine 1713–cysteine 1763, cysteine 1805–cysteine 1855, cysteine 1897–cysteine 1947, cysteine 1989–cysteine 2039, and cysteine 2081–cysteine 2131. Cysteine 2263 and cysteine 2313 are oxidised to a cystine. 8 cysteine pairs are disulfide-bonded: cysteine 2620–cysteine 2669, cysteine 2743–cysteine 2793, cysteine 2922–cysteine 2972, cysteine 3100–cysteine 3150, cysteine 3280–cysteine 3330, cysteine 3369–cysteine 3419, cysteine 3549–cysteine 3599, and cysteine 3638–cysteine 3688. At serine 3321 the chain carries Phosphoserine. Serine 3802 carries the post-translational modification Phosphoserine. 14 disulfide bridges follow: cysteine 3815/cysteine 3864, cysteine 3903/cysteine 3952, cysteine 4064/cysteine 4113, cysteine 4152/cysteine 4201, cysteine 4240/cysteine 4289, cysteine 4328/cysteine 4377, cysteine 4416/cysteine 4465, cysteine 4504/cysteine 4553, cysteine 4592/cysteine 4641, cysteine 4680/cysteine 4729, cysteine 4768/cysteine 4817, cysteine 4856/cysteine 4906, cysteine 4945/cysteine 4995, and cysteine 5034/cysteine 5086. Serine 4960 is subject to Phosphoserine. The region spanning 5471-5569 is the Fibronectin type-III 2 domain; the sequence is PPEDAEVVGR…VKIAPAPAPA (99 aa). An intrachain disulfide couples cysteine 5590 to cysteine 5643. Serine 5699 is modified (phosphoserine). The segment at 5700-5736 is disordered; the sequence is REPTLDSISELPEEDSRVQHLRQEAEETAPDLSEGYS. Phosphothreonine is present on threonine 5703. Serine 5706 is subject to Phosphoserine. Residues 5713–5724 show a composition bias toward basic and acidic residues; the sequence is EDSRVQHLRQEA. At threonine 5737 the chain carries Phosphothreonine. Serine 5754 carries the post-translational modification Phosphoserine. Residues 5821–5850 form the IQ domain; the sequence is LDKAAVKIQAAFKGYKVRKEMKQQEGPVFS. An Ig-like 48 domain is found at 5847 to 5930; it reads PVFSRTFGDT…QVSTKSGRVS (84 aa). Cysteine 5868 and cysteine 5920 are disulfide-bonded. The segment at 5977 to 5996 is disordered; that stretch reads EEELFLSADEGPGEPEEPAD. 3 Ig-like domains span residues 6077–6166, 6209–6298, and 6320–6416; these read PVFL…AELR, PQVL…ARLL, and PRIL…LHIS. A disulfide bridge connects residues cysteine 6098 and cysteine 6150. The interval 6504–6546 is disordered; it reads KLQVPGGDSDEETKTPSASPRHGRSRPSSSVQESSSESEDGDS. Serine 6512 is modified (phosphoserine). Threonine 6518 carries the phosphothreonine modification. Low complexity predominate over residues 6519-6538; that stretch reads PSASPRHGRSRPSSSVQESS. Phosphoserine is present on residues serine 6520 and serine 6522. Residues 6549-6616 form the SH3 domain; it reads EIFDIYVVTA…SPAYLDKRLK (68 aa). The region spanning 6642-6826 is the DH domain; sequence RLSSVIQELL…SALPQRAENK (185 aa). The PH domain maps to 6844–6953; the sequence is EPIRQGHFIV…WVKEICGIQQ (110 aa). Arginine 6924 is a binding site for a 1,2-diacyl-sn-glycero-3-phospho-(1D-myo-inositol-4,5-bisphosphate). Residue arginine 6929 coordinates a 1,2-diacyl-sn-glycero-3-phospho-(1D-myo-inositol-3,4-bisphosphate). Ig-like domains are found at residues 6963–7046 and 7057–7147; these read PEFE…GNAS and PRFV…GELY. Intrachain disulfides connect cysteine 6984-cysteine 7036 and cysteine 7078-cysteine 7131. The disordered stretch occupies residues 7200–7257; the sequence is ALGPSPGDLPNTRQSEPPAFEEAASQIPGAASGTPEVSQPGTHKGLEQETTSSGSQGW. The span at 7247–7257 shows a compositional bias: polar residues; it reads QETTSSGSQGW. The Ig-like 54 domain maps to 7306-7394; that stretch reads PSMQVTIEDV…GQVLCKAELL (89 aa). Residues 7416 to 7669 form the Protein kinase 1 domain; it reads YDVQEEIGRG…TSQCLAHPWF (254 aa). ATP contacts are provided by residues 7422–7430 and lysine 7445; that span reads IGRGVFGFV. Aspartate 7535 (proton acceptor) is an active-site residue. Disordered stretches follow at residues 7717–7810, 7879–8106, and 8150–8180; these read GPPD…SPGC, EQAS…TTRK, and SSEE…VPLR. Residue serine 7779 is modified to Phosphoserine. A compositionally biased stretch (low complexity) spans 7793–7804; that stretch reads AAVPASPQSAGP. A compositionally biased stretch (basic and acidic residues) spans 7941–7952; sequence TTAKDRGHKEGF. Positions 7986-7996 are enriched in polar residues; it reads SCHSELGSGSQ. Low complexity-rich tracts occupy residues 8000–8014 and 8053–8073; these read GPPS…PPQS and GSLS…ASQV. Phosphoserine is present on serine 8161. In terms of domain architecture, Ig-like 55 spans 8380 to 8464; sequence KGRDQELSDE…VSNPLGTAVT (85 aa). An intrachain disulfide couples cysteine 8401 to cysteine 8453. Residues 8474–8566 form the Fibronectin type-III 3 domain; that stretch reads PSSSPRPEVG…PSEQVLLGGP (93 aa). Positions 8590-8842 constitute a Protein kinase 2 domain; the sequence is FAFQMQIRRG…ASTCLQCGWL (253 aa). ATP is bound by residues 8596–8604 and lysine 8619; that span reads IRRGRFSVV. The Proton acceptor role is filled by aspartate 8709.

It belongs to the protein kinase superfamily. CAMK Ser/Thr protein kinase family. In terms of assembly, interacts (via protein kinase domain 1) with CDH2 and (via protein kinase domain 1) with ATP1B1. Isoform 2 is found in a complex with DSG2, DESM, GJA1, CDH2 and VCL. Isoform 3 is found in a complex with DSG2, DESM, GJA1, CDH2, ANK3 and VCL. Mg(2+) serves as cofactor. Autophosphorylated by protein kinase domain 1 and 2. Post-translationally, two small isoforms, one probably containing protein kinase domain 2 and a partial protein kinase domain 1 and one containing only protein kinase domain 2, are glycosylated. In terms of tissue distribution, expressed in skeletal muscles including flexor digitorum brevis (FDB), soleus and tibialis anterior muscles, and to a lesser extent in heart muscles (at protein level). Isoform 2 and isoform 3 are expressed in the myocardium (at protein level).

The protein localises to the cytoplasm. It localises to the myofibril. The protein resides in the sarcomere. It is found in the m line. Its subcellular location is the z line. The protein localises to the cell membrane. It localises to the sarcolemma. The protein resides in the nucleus. It is found in the secreted. It carries out the reaction L-seryl-[protein] + ATP = O-phospho-L-seryl-[protein] + ADP + H(+). The catalysed reaction is L-threonyl-[protein] + ATP = O-phospho-L-threonyl-[protein] + ADP + H(+). Structural component of striated muscles which plays a role in myofibrillogenesis. Probably involved in the assembly of myosin into sarcomeric A bands in striated muscle. Has serine/threonine protein kinase activity and phosphorylates N-cadherin CDH2 and sodium/potassium-transporting ATPase subunit ATP1B1. Binds (via the PH domain) strongly to phosphatidylinositol 3,4-bisphosphate (PtdIns(3,4)P2) and phosphatidylinositol 4,5-bisphosphate (PtdIns(4,5)P2), and to a lesser extent to phosphatidylinositol 3-phosphate (PtdIns(3)P), phosphatidylinositol 4-phosphate (PtdIns(4)P), phosphatidylinositol 5-phosphate (PtdIns(5)P) and phosphatidylinositol 3,4,5-trisphosphate (PtdIns(3,4,5)P3). In terms of biological role, isoform 2 and isoform 3: bind phosphatidylinositol bisphosphates (PIP2s) via their PH domains and negatively regulate the PI3K/AKT/mTOR signaling pathway, thus contributing to the regulation of cardiomyocyte size and adhesion. The polypeptide is Obscurin (Mus musculus (Mouse)).